The primary structure comprises 673 residues: MSKSFVLHSAFRPSGDQPEAIRRLEEGLEDGLAHQTLLGVTGSGKTFTIANVIADLQRPTMVLAPNKTLAAQLYGEMKEFFPENAVEYFVSYYDYYQPEAYVPSSDTFIEKDASVNEHIEQMRLSATKALLERRDVVVVASVSAIYGLGDPDLYLKMMLHLTVGMLIDQRAILRRLAELQYTRNDQAFQRGTFRVRGEVIDVFPAESDDIALRIELFDEEVERLSLFDPLTGHVESTVPRYTIYPKTHYVTPRERIVQAMEEIKLELAERRKVLLANNKLLEEQRLTQRTQFDLEMMNELGYCSGIENYSRFLSGRGPGEPPPTLFDYLPADGLLVIDESHVTVPQIGGMYRGDRARKETLVEYGFRLPSALDNRPMKFEEFEALAPQTIYVSATPGAYELDKSGGEVVDQVVRPTGLLDPIIEVRPVATQVDDLLSEIRLRTAINERVLVTTLTKRMAEDLTEYLEEHGERVRYLHSDIDTVERMEIIRDLRLGEFDVLVGINLLREGLDMPEVSLVAILDADKEGFLRSERSLIQTIGRAARNINGKAILYGDKITPSMAKAIGETERRREKQQRYNEEHGIVPQGLNKKVVDILQLGQGLAKTKAKGRGKAKAVEPAGLSAVEMTPKALQQKIHELEGQMMQHAQNLEFEEAAQIRDQLHQLRELFIAAS.

Positions 26 to 183 (EGLEDGLAHQ…RRLAELQYTR (158 aa)) constitute a Helicase ATP-binding domain. 39–46 (GVTGSGKT) serves as a coordination point for ATP. Positions 92 to 115 (YYDYYQPEAYVPSSDTFIEKDASV) match the Beta-hairpin motif. The region spanning 431 to 597 (QVDDLLSEIR…GLNKKVVDIL (167 aa)) is the Helicase C-terminal domain. One can recognise a UVR domain in the interval 633–668 (QQKIHELEGQMMQHAQNLEFEEAAQIRDQLHQLREL).

The protein belongs to the UvrB family. As to quaternary structure, forms a heterotetramer with UvrA during the search for lesions. Interacts with UvrC in an incision complex.

The protein resides in the cytoplasm. The UvrABC repair system catalyzes the recognition and processing of DNA lesions. A damage recognition complex composed of 2 UvrA and 2 UvrB subunits scans DNA for abnormalities. Upon binding of the UvrA(2)B(2) complex to a putative damaged site, the DNA wraps around one UvrB monomer. DNA wrap is dependent on ATP binding by UvrB and probably causes local melting of the DNA helix, facilitating insertion of UvrB beta-hairpin between the DNA strands. Then UvrB probes one DNA strand for the presence of a lesion. If a lesion is found the UvrA subunits dissociate and the UvrB-DNA preincision complex is formed. This complex is subsequently bound by UvrC and the second UvrB is released. If no lesion is found, the DNA wraps around the other UvrB subunit that will check the other stand for damage. The sequence is that of UvrABC system protein B from Klebsiella pneumoniae (strain 342).